The following is a 226-amino-acid chain: Spermatogenesis-associated protein 25 (226 aa).

A helical membrane pass occupies residues 153-173; that stretch reads ICILTLAMMIAGIPTVPVPGL.

This sequence belongs to the SPATA25 family. As to expression, expressed strongly in testis, weakly in epididymis and not detected in other tissues.

Its subcellular location is the membrane. May play a role in spermatogenesis. The protein is Spermatogenesis-associated protein 25 (Spata25) of Mus musculus (Mouse).